Consider the following 319-residue polypeptide: Acetyl-coenzyme A carboxylase carboxyl transferase subunit alpha (319 aa).

Residues 35–296 (DLEKEIKQLE…KQRLLEQLKE (262 aa)) enclose the CoA carboxyltransferase C-terminal domain.

Belongs to the AccA family. As to quaternary structure, acetyl-CoA carboxylase is a heterohexamer composed of biotin carboxyl carrier protein (AccB), biotin carboxylase (AccC) and two subunits each of ACCase subunit alpha (AccA) and ACCase subunit beta (AccD).

The protein resides in the cytoplasm. It catalyses the reaction N(6)-carboxybiotinyl-L-lysyl-[protein] + acetyl-CoA = N(6)-biotinyl-L-lysyl-[protein] + malonyl-CoA. Its pathway is lipid metabolism; malonyl-CoA biosynthesis; malonyl-CoA from acetyl-CoA: step 1/1. Its function is as follows. Component of the acetyl coenzyme A carboxylase (ACC) complex. First, biotin carboxylase catalyzes the carboxylation of biotin on its carrier protein (BCCP) and then the CO(2) group is transferred by the carboxyltransferase to acetyl-CoA to form malonyl-CoA. This is Acetyl-coenzyme A carboxylase carboxyl transferase subunit alpha from Aliivibrio fischeri (strain ATCC 700601 / ES114) (Vibrio fischeri).